The sequence spans 177 residues: CDP-diacylglycerol--serine O-phosphatidyltransferase (177 aa).

The next 5 membrane-spanning stretches (helical) occupy residues 4–24 (IPCM…HSLL), 28–48 (IHSA…DGMA), 77–97 (MLAY…CALT), 116–136 (LPTF…ILSF), and 140–160 (PILL…KIKF).

Belongs to the CDP-alcohol phosphatidyltransferase class-I family.

The protein localises to the cell membrane. The enzyme catalyses a CDP-1,2-diacyl-sn-glycerol + L-serine = a 1,2-diacyl-sn-glycero-3-phospho-L-serine + CMP + H(+). The protein is CDP-diacylglycerol--serine O-phosphatidyltransferase (pssA) of Bacillus subtilis (strain 168).